Here is a 535-residue protein sequence, read N- to C-terminus: Ribonuclease Y (535 aa).

Residues I4–I24 traverse the membrane as a helical segment. The interval E118 to I141 is disordered. One can recognise a KH domain in the interval T225–L285. The HD domain maps to V351–A444.

It belongs to the RNase Y family.

The protein localises to the cell membrane. Functionally, endoribonuclease that initiates mRNA decay. The polypeptide is Ribonuclease Y (Streptococcus pyogenes serotype M18 (strain MGAS8232)).